The chain runs to 188 residues: Large ribosomal subunit protein eL18 (188 aa).

The protein belongs to the eukaryotic ribosomal protein eL18 family.

Its subcellular location is the cytoplasm. This is Large ribosomal subunit protein eL18 (RpL18) from Drosophila melanogaster (Fruit fly).